We begin with the raw amino-acid sequence, 1010 residues long: Trifunctional purine biosynthetic protein adenosine-3 (1010 aa).

A2 carries the N-acetylalanine modification. Residue S10 is modified to Phosphoserine. One can recognise an ATP-grasp domain in the interval 111–318; the sequence is KEFMDRHEIP…LYEVMQSTLD (208 aa). ATP is bound by residues 190–193, E197, R220, and N229; that span reads EEFL. Mg(2+)-binding residues include E288 and N290. K350 carries the N6-acetyllysine modification. Residues 434–809 form an AIRS domain region; that stretch reads GLTYKDSGVD…NFPVQQKKAR (376 aa). A phosphoserine mark is found at S440 and S467. Residue T682 is modified to Phosphothreonine. Positions 810–1010 are GART domain; it reads VAVLISGTGS…DGKIHWAKEQ (201 aa). 818–820 contacts N(1)-(5-phospho-beta-D-ribosyl)glycinamide; the sequence is GSN. (6R)-10-formyltetrahydrofolate contacts are provided by residues R871, 896-899, and N913; that span reads MRIL. Catalysis depends on H915, which acts as the Proton donor. A (6R)-10-formyltetrahydrofolate-binding site is contributed by 947-951; the sequence is AEDVD. Position 977–980 (977–980) interacts with N(1)-(5-phospho-beta-D-ribosyl)glycinamide; sequence KVAE.

It in the N-terminal section; belongs to the GARS family. This sequence in the central section; belongs to the AIR synthase family. The protein in the C-terminal section; belongs to the GART family. Homodimer. It depends on Mg(2+) as a cofactor. Mn(2+) is required as a cofactor. As to expression, detected in liver, kidney and brain.

The catalysed reaction is 5-phospho-beta-D-ribosylamine + glycine + ATP = N(1)-(5-phospho-beta-D-ribosyl)glycinamide + ADP + phosphate + H(+). It catalyses the reaction 2-formamido-N(1)-(5-O-phospho-beta-D-ribosyl)acetamidine + ATP = 5-amino-1-(5-phospho-beta-D-ribosyl)imidazole + ADP + phosphate + H(+). The enzyme catalyses N(1)-(5-phospho-beta-D-ribosyl)glycinamide + (6R)-10-formyltetrahydrofolate = N(2)-formyl-N(1)-(5-phospho-beta-D-ribosyl)glycinamide + (6S)-5,6,7,8-tetrahydrofolate + H(+). The protein operates within purine metabolism; IMP biosynthesis via de novo pathway; 5-amino-1-(5-phospho-D-ribosyl)imidazole from N(2)-formyl-N(1)-(5-phospho-D-ribosyl)glycinamide: step 2/2. It participates in purine metabolism; IMP biosynthesis via de novo pathway; N(1)-(5-phospho-D-ribosyl)glycinamide from 5-phospho-alpha-D-ribose 1-diphosphate: step 2/2. Its pathway is purine metabolism; IMP biosynthesis via de novo pathway; N(2)-formyl-N(1)-(5-phospho-D-ribosyl)glycinamide from N(1)-(5-phospho-D-ribosyl)glycinamide (10-formyl THF route): step 1/1. Functionally, trifunctional enzyme that catalyzes three distinct reactions as part of the 'de novo' inosine monophosphate biosynthetic pathway. The polypeptide is Trifunctional purine biosynthetic protein adenosine-3 (Gart) (Mus musculus (Mouse)).